The sequence spans 881 residues: Alanine--tRNA ligase (881 aa).

Residues His563, His567, Cys672, and His676 each coordinate Zn(2+).

The protein belongs to the class-II aminoacyl-tRNA synthetase family. Zn(2+) is required as a cofactor.

Its subcellular location is the cytoplasm. The enzyme catalyses tRNA(Ala) + L-alanine + ATP = L-alanyl-tRNA(Ala) + AMP + diphosphate. Functionally, catalyzes the attachment of alanine to tRNA(Ala) in a two-step reaction: alanine is first activated by ATP to form Ala-AMP and then transferred to the acceptor end of tRNA(Ala). Also edits incorrectly charged Ser-tRNA(Ala) and Gly-tRNA(Ala) via its editing domain. This chain is Alanine--tRNA ligase, found in Azorhizobium caulinodans (strain ATCC 43989 / DSM 5975 / JCM 20966 / LMG 6465 / NBRC 14845 / NCIMB 13405 / ORS 571).